Here is a 940-residue protein sequence, read N- to C-terminus: AP-2 complex subunit alpha (940 aa).

Phosphoserine is present on residues serine 632 and serine 634. The segment covering serine 651–threonine 662 has biased composition (polar residues). The interval serine 651–serine 679 is disordered. Low complexity predominate over residues serine 668–serine 679.

This sequence belongs to the adaptor complexes large subunit family. As to quaternary structure, adaptor protein complex 2 (AP-2) is a heterotetramer composed of two large adaptins (alpha-type and beta-type subunits), a medium adaptin (mu-type subunit AP50) and a small adaptin (sigma-type subunit AP17). As to expression, expressed in the Garland cells, imaginal disks, adult midgut precursors, the antenno-maxillary complex, the endoderm, the fat bodies, and the visceral mesoderm and cells of the CNS and PNS including neuroblasts, the presumptive stomatogastric nervous system, and the lateral chordotonal sense organs.

Its subcellular location is the cell membrane. It localises to the membrane. The protein localises to the coated pit. In terms of biological role, adaptins are components of the adapter complexes which link clathrin to receptors in coated vesicles. Clathrin-associated protein complexes are believed to interact with the cytoplasmic tails of membrane proteins, leading to their selection and concentration. AP-2alpha is a subunit of the plasma membrane adapter. The protein is AP-2 complex subunit alpha (AP-2alpha) of Drosophila melanogaster (Fruit fly).